Consider the following 632-residue polypeptide: X-ray repair cross-complementing protein 5 (632 aa).

Arg52 serves as the catalytic Schiff-base intermediate with DNA; for 5'-deoxyribose-5-phosphate lyase activity. The Ku domain maps to 283–490 (LYLNKDLSFS…VDKMKGIIQK (208 aa)). Positions 555–578 (DYSPEGKAAKRKQAGDAQAEKRPK) are disordered. The SAP domain occupies 595–629 (LGKLTVSALKDTCRHYGLRSGGKKQELIDALTEYF).

This sequence belongs to the ku70 family. As to quaternary structure, heterodimer composed of XRCC5/Ku80 and XRCC6/Ku70. Component of the core long-range non-homologous end joining (NHEJ) complex (also named DNA-PK complex) composed of PRKDC, LIG4, XRCC4, XRCC6/Ku70, XRCC5/Ku86 and NHEJ1/XLF. Additional component of the NHEJ complex includes PAXX. Following autophosphorylation, PRKDC dissociates from DNA, leading to formation of the short-range NHEJ complex, composed of LIG4, XRCC4, XRCC6/Ku70, XRCC5/Ku86 and NHEJ1/XLF. Post-translationally, phosphorylated on serine residues.

Its subcellular location is the nucleus. It is found in the chromosome. Its function is as follows. Single-stranded DNA-dependent ATP-dependent helicase that plays a key role in DNA non-homologous end joining (NHEJ) by recruiting DNA-PK to DNA. Required for double-strand break repair and V(D)J recombination. Also has a role in chromosome translocation. Has a role in chromosome translocation. The DNA helicase II complex binds preferentially to fork-like ends of double-stranded DNA in a cell cycle-dependent manner. It works in the 3'-5' direction. During NHEJ, the XRCC5-XRRC6 dimer performs the recognition step: it recognizes and binds to the broken ends of the DNA and protects them from further resection. Binding to DNA may be mediated by XRCC6. The XRCC5-XRRC6 dimer acts as a regulatory subunit of the DNA-dependent protein kinase complex DNA-PK by increasing the affinity of the catalytic subunit PRKDC to DNA by 100-fold. The XRCC5-XRRC6 dimer is probably involved in stabilizing broken DNA ends and bringing them together. The assembly of the DNA-PK complex to DNA ends is required for the NHEJ ligation step. Probably also acts as a 5'-deoxyribose-5-phosphate lyase (5'-dRP lyase), by catalyzing the beta-elimination of the 5' deoxyribose-5-phosphate at an abasic site near double-strand breaks. 5'-dRP lyase activity allows to 'clean' the termini of abasic sites, a class of nucleotide damage commonly associated with strand breaks, before such broken ends can be joined. The XRCC5-XRRC6 dimer together with APEX1 acts as a negative regulator of transcription. The polypeptide is X-ray repair cross-complementing protein 5 (XRCC6) (Gallus gallus (Chicken)).